The primary structure comprises 286 residues: UDP-3-O-acyl-N-acetylglucosamine deacetylase (286 aa).

H81, H240, and D244 together coordinate Zn(2+). H266 serves as the catalytic Proton donor.

Belongs to the LpxC family. The cofactor is Zn(2+).

The enzyme catalyses a UDP-3-O-[(3R)-3-hydroxyacyl]-N-acetyl-alpha-D-glucosamine + H2O = a UDP-3-O-[(3R)-3-hydroxyacyl]-alpha-D-glucosamine + acetate. The protein operates within glycolipid biosynthesis; lipid IV(A) biosynthesis; lipid IV(A) from (3R)-3-hydroxytetradecanoyl-[acyl-carrier-protein] and UDP-N-acetyl-alpha-D-glucosamine: step 2/6. In terms of biological role, catalyzes the hydrolysis of UDP-3-O-myristoyl-N-acetylglucosamine to form UDP-3-O-myristoylglucosamine and acetate, the committed step in lipid A biosynthesis. This Francisella tularensis subsp. tularensis (strain FSC 198) protein is UDP-3-O-acyl-N-acetylglucosamine deacetylase.